Consider the following 296-residue polypeptide: NAD kinase (296 aa).

The active-site Proton acceptor is Asp73. NAD(+)-binding positions include 73–74 (DG), Lys78, 151–152 (NE), Arg178, Asp180, and 191–196 (TAHAMS).

The protein belongs to the NAD kinase family. A divalent metal cation serves as cofactor.

It is found in the cytoplasm. It catalyses the reaction NAD(+) + ATP = ADP + NADP(+) + H(+). Its function is as follows. Involved in the regulation of the intracellular balance of NAD and NADP, and is a key enzyme in the biosynthesis of NADP. Catalyzes specifically the phosphorylation on 2'-hydroxyl of the adenosine moiety of NAD to yield NADP. In Francisella tularensis subsp. tularensis (strain WY96-3418), this protein is NAD kinase.